The following is a 107-amino-acid chain: UPF0145 protein YbjQ (107 aa).

This sequence belongs to the UPF0145 family.

This is UPF0145 protein YbjQ from Salmonella gallinarum (strain 287/91 / NCTC 13346).